Consider the following 464-residue polypeptide: MYSNVIGTVTSGKRKVYLLSLLLIGFWDCVTCHGSPVDICTAKPRDIPMNPMCIYRSPEKKATEDEGSEQKIPEATNRRVWELSKANSRFATTFYQHLADSKNDNDNIFLSPLSISTAFAMTKLGACNDTLQQLMEVFKFDTISEKTSDQIHFFFAKLNCRLYRKANKSSKLVSANRLFGDKSLTFNETYQDISELVYGAKLQPLDFKENAEQSRAAINKWVSNKTEGRITDVIPSEAINELTVLVLVNTIYFKGLWKSKFSPENTRKELFYKADGESCSASMMYQEGKFRYRRVAEGTQVLELPFKGDDITMVLILPKPEKSLAKVEKELTPEVLQEWLDELEEMMLVVHMPRFRIEDGFSLKEQLQDMGLVDLFSPEKSKLPGIVAEGRDDLYVSDAFHKAFLEVNEEGSEAAASTAVVIAGRSLNPNRVTFKANRPFLVFIREVPLNTIIFMGRVANPCVK.

An N-terminal signal peptide occupies residues 1 to 32 (MYSNVIGTVTSGKRKVYLLSLLLIGFWDCVTC). 2 disulfides stabilise this stretch: cysteine 40-cysteine 160 and cysteine 53-cysteine 127. Phosphothreonine; by FAM20C is present on threonine 63. Serine 68 bears the Phosphoserine; by FAM20C mark. Tryptophan 81 contributes to the heparin binding site. N-linked (GlcNAc...) asparagine glycosylation occurs at asparagine 128. Arginine 161 lines the heparin pocket. N-linked (GlcNAc...) asparagine glycosylation occurs at asparagine 167. Arginine 177 contacts heparin. N-linked (GlcNAc...) (complex) asparagine glycosylation occurs at asparagine 187. N-linked (GlcNAc...) asparagine glycosylation occurs at asparagine 224. A disulfide bridge connects residues cysteine 279 and cysteine 462.

It belongs to the serpin family. Forms protease inhibiting heterodimer with TMPRSS7. In terms of processing, phosphorylated by FAM20C in the extracellular medium. As to expression, found in plasma.

The protein localises to the secreted. The protein resides in the extracellular space. In terms of biological role, most important serine protease inhibitor in plasma that regulates the blood coagulation cascade. AT-III inhibits thrombin, matriptase-3/TMPRSS7, as well as factors IXa, Xa and XIa. Its inhibitory activity is greatly enhanced in the presence of heparin. The chain is Antithrombin-III (SERPINC1) from Homo sapiens (Human).